The chain runs to 72 residues: Translation initiation factor IF-1 (72 aa).

Residues methionine 1–lysine 72 form the S1-like domain.

The protein belongs to the IF-1 family. In terms of assembly, component of the 30S ribosomal translation pre-initiation complex which assembles on the 30S ribosome in the order IF-2 and IF-3, IF-1 and N-formylmethionyl-tRNA(fMet); mRNA recruitment can occur at any time during PIC assembly.

Its subcellular location is the cytoplasm. One of the essential components for the initiation of protein synthesis. Stabilizes the binding of IF-2 and IF-3 on the 30S subunit to which N-formylmethionyl-tRNA(fMet) subsequently binds. Helps modulate mRNA selection, yielding the 30S pre-initiation complex (PIC). Upon addition of the 50S ribosomal subunit IF-1, IF-2 and IF-3 are released leaving the mature 70S translation initiation complex. In Helicobacter acinonychis (strain Sheeba), this protein is Translation initiation factor IF-1.